We begin with the raw amino-acid sequence, 463 residues long: tRNA modification GTPase MnmE (463 aa).

Arginine 30, glutamate 92, and arginine 132 together coordinate (6S)-5-formyl-5,6,7,8-tetrahydrofolate. The TrmE-type G domain maps to 227 to 386 (GLRVALVGRP…LVQAVLERCG (160 aa)). A K(+)-binding site is contributed by asparagine 237. Residues 237-242 (NVGKSS), 256-262 (TDLPGTT), 281-284 (DTAG), and 342-345 (NKAD) contribute to the GTP site. Serine 241 provides a ligand contact to Mg(2+). Positions 256, 258, and 261 each coordinate K(+). A Mg(2+)-binding site is contributed by threonine 262. Lysine 463 serves as a coordination point for (6S)-5-formyl-5,6,7,8-tetrahydrofolate.

This sequence belongs to the TRAFAC class TrmE-Era-EngA-EngB-Septin-like GTPase superfamily. TrmE GTPase family. In terms of assembly, homodimer. Heterotetramer of two MnmE and two MnmG subunits. It depends on K(+) as a cofactor.

It localises to the cytoplasm. Its function is as follows. Exhibits a very high intrinsic GTPase hydrolysis rate. Involved in the addition of a carboxymethylaminomethyl (cmnm) group at the wobble position (U34) of certain tRNAs, forming tRNA-cmnm(5)s(2)U34. The protein is tRNA modification GTPase MnmE of Synechococcus sp. (strain CC9311).